Here is a 255-residue protein sequence, read N- to C-terminus: Small ribosomal subunit protein uS2 (255 aa).

Residues 230–255 form a disordered region; it reads QGSSGRDLGASSEVPVEPALEEAAEG.

The protein belongs to the universal ribosomal protein uS2 family.

This Rhizobium johnstonii (strain DSM 114642 / LMG 32736 / 3841) (Rhizobium leguminosarum bv. viciae) protein is Small ribosomal subunit protein uS2.